Consider the following 361-residue polypeptide: MTTTDRAGLGRQLQMIRGLHWGYGSNGDPYPMLLCGHDDDPQRRYRSMRESGVRRSRTETWVVADHATARQVLDDPAFTRATGRTPEWMRAAGAPPAEWAQPFRDVHAASWEGEVPDVGELAESFAGLLPGAGARLDLVGDFAWQVPVQGMTAVLGAAGVLRGAAWDARVSLDAQLSPQQLAVTEAAVAALPADPALRALFAGAEMTANTVVDAVLAVSAEPGLAERIADDPAAAQRTVAEVLRLHPALHLERRTATAEVRLGEHVIGEGEEVVVVVAAANRDPEVFAEPDRLDVDRPDADRALSAHRGHPGRLEELVTALATAALRAAAKALPGLTPSGPVVRRRRSPVLRGTNRCPVEL.

It belongs to the cytochrome P450 family. As to quaternary structure, heterotetramer composed of EryCII and EryCIII.

Its pathway is antibiotic biosynthesis; erythromycin biosynthesis. Involved in the erythromycin biosynthesis pathway. Acts by forming a complex and stabilizing the desosaminyl transferase EryCIII. The polypeptide is Cytochrome P450 family protein EryCII (eryCII) (Saccharopolyspora erythraea (strain ATCC 11635 / DSM 40517 / JCM 4748 / NBRC 13426 / NCIMB 8594 / NRRL 2338)).